The following is a 154-amino-acid chain: Anti-sigma-E factor RseA (154 aa).

Threonine 39 carries the post-translational modification Phosphothreonine; by PknB. Residues histidine 66, cysteine 70, and cysteine 73 each coordinate Zn(2+). The segment at 104–154 (SEIPRCPPEGPSKGSSGGSSQGPPDGAAAGFGDRFADGDGGNRGRQSRVRR) is disordered. Residues 124–136 (QGPPDGAAAGFGD) are compositionally biased toward low complexity.

This sequence belongs to the zinc-associated anti-sigma factor (ZAS) superfamily. In terms of assembly, interacts with cognate ECF RNA polymerase sigma factor SigE under reducing conditions; this inhibits the interaction of SigE with the RNA polymerase catalytic core. Zn(2+) is required as a cofactor. Post-translationally, phosphorylated by PknB on Thr-39; can be dephosphorylated (at least in vitro) by PstP. Phosphorylation is the signal for subsequent degradation by the ClpC1-ClpP2 complex. Degraded following vancomycin treatment (surface stress) by a ClpC1-ClpP2 complex.

The protein resides in the cytoplasm. Its function is as follows. An anti-sigma factor for extracytoplasmic function (ECF) sigma factor SigE. ECF sigma factors are held in an inactive form by an anti-sigma factor. This chain is Anti-sigma-E factor RseA (rseA), found in Mycobacterium tuberculosis (strain ATCC 25618 / H37Rv).